Reading from the N-terminus, the 103-residue chain is Large ribosomal subunit protein uL24 (103 aa).

It belongs to the universal ribosomal protein uL24 family. Part of the 50S ribosomal subunit.

One of two assembly initiator proteins, it binds directly to the 5'-end of the 23S rRNA, where it nucleates assembly of the 50S subunit. In terms of biological role, one of the proteins that surrounds the polypeptide exit tunnel on the outside of the subunit. In Haemophilus influenzae (strain ATCC 51907 / DSM 11121 / KW20 / Rd), this protein is Large ribosomal subunit protein uL24.